Consider the following 481-residue polypeptide: Velvet complex subunit B (481 aa).

Disordered stretches follow at residues 1–157 and 241–339; these read MNSA…YSKI and GTGA…NGYG. Composition is skewed to pro residues over residues 36–45, 53–62, and 96–112; these read HPPPPLPPPS, PPLPPPPSAP, and PYAP…QYPR. The 305-residue stretch at 160 to 464 folds into the Velvet domain; it reads GSGWKYSLDV…ANQGIKIPIR (305 aa). Composition is skewed to low complexity over residues 241-255 and 293-325; these read GTGA…TYSS and QQSY…SAEP.

It belongs to the velvet family. VelB subfamily. In terms of assembly, component of the heterotrimeric velvet complex composed of laeA, veA and velB; VeA acting as a bridging protein between laeA and velB. Forms a heterodimeric complex with vosA; the formation of the velB-vosA complex is light-dependent.

It localises to the nucleus. Its subcellular location is the cytoplasm. Its function is as follows. Component of the velvet transcription factor complex that controls sexual/asexual developmental ratio in response to light, promoting sexual development in the darkness while stimulating asexual sporulation under illumination. The velvet complex acts as a global regulator for secondary metabolite gene expression. Component of the velB-VosA heterodimeric complex that plays a dual role in activating genes associated with spore maturation and repressing certain development-associated genes. The velB-VosA complex binds DNA through the DNA-binding domain of vosA that recognizes an 11-nucleotide consensus sequence 5'-CTGGCCGCGGC-3' consisting of two motifs in the promoters of key developmental regulatory genes. Controls the biosynthetic gene cluster for beauvericin, a depsipeptide mycotoxin that functions as a virulence determinant. Also regulates chromatin structure and transcription of siderophore biosynthetic genes and is required for infection of tomato plants. In Fusarium oxysporum f. sp. lycopersici (strain 4287 / CBS 123668 / FGSC 9935 / NRRL 34936) (Fusarium vascular wilt of tomato), this protein is Velvet complex subunit B.